Here is a 521-residue protein sequence, read N- to C-terminus: Probable xyloglucan galactosyltransferase GT14 (521 aa).

The Cytoplasmic portion of the chain corresponds to 1–30 (MRPKNYSQMEKPISITTGKFRTNNNNNHNN). A helical; Signal-anchor for type II membrane protein transmembrane segment spans residues 31–51 (VWFVVPLFFILCFVLLCFDYS). Residues 52 to 521 (ALFTDTDETA…SPYEEPQVLA (470 aa)) lie on the Lumenal side of the membrane. The segment at 72 to 92 (TSSEFTKDDNFSRFPDDPSPD) is disordered. The segment covering 76–87 (FTKDDNFSRFPD) has biased composition (basic and acidic residues). N-linked (GlcNAc...) asparagine glycosylation is found at Asn81, Asn177, Asn203, Asn249, Asn265, and Asn411. The interval 492–521 (RQGKDGSDGFDDRDDYKYTFSPYEEPQVLA) is disordered.

This sequence belongs to the glycosyltransferase 47 family. In terms of tissue distribution, expressed in roots, hypocotyls, cotyledons, leaves, stems, stamens and carpels.

The protein resides in the golgi apparatus membrane. Functionally, functions in xyloglucan synthesis by adding side chains to the xylosylated glucan backbone. Involved in the galactosylation of hemicellulose xyloglucan. The chain is Probable xyloglucan galactosyltransferase GT14 from Arabidopsis thaliana (Mouse-ear cress).